A 214-amino-acid chain; its full sequence is Anti-sigma-F factor NrsF (214 aa).

Topologically, residues 1 to 25 (MRTDDLIDALAADAGRGTEPAPPRR) are cytoplasmic. The helical transmembrane segment at 26 to 46 (LALVAGLGGVAALLLVLGWLQ) threads the bilayer. Over 47 to 53 (ARPDLGQ) the chain is Periplasmic. The helical transmembrane segment at 54 to 74 (AILGPMFWVKAIYTGLLGLAG) threads the bilayer. Topologically, residues 75–90 (YLAVERLSRPGGSGRR) are cytoplasmic. Residues 91–111 (GWIIGAVVFGACAVAGIYQAI) form a helical membrane-spanning segment. At 112–134 (TSPDVQAALKLLHGYSWRSCSPR) the chain is on the periplasmic side. A helical transmembrane segment spans residues 135–155 (ILVLGLPMLALGLWALRGMAP). Over 156-158 (TRP) the chain is Cytoplasmic. Residues 159-179 (GLAGFAMGLFSGGVVATLYGL) form a helical membrane-spanning segment. Residues 180-185 (HCPEHT) lie on the Periplasmic side of the membrane. Residues 186–206 (FTFLALWYSLGVLALGLIGGW) form a helical membrane-spanning segment. Residues 207-214 (AGRWLLRW) lie on the Cytoplasmic side of the membrane.

The protein belongs to the NrsF anti-sigma-F factor family.

Its subcellular location is the cell inner membrane. An anti-sigma factor for extracytoplasmic function (ECF) sigma factor sigma-F (SigF), which responds to chromate and cadmium. Overexpression leads to loss of response to dichromate. ECF sigma factors are held in an inactive form by a cognate anti-sigma factor. In Caulobacter vibrioides (strain NA1000 / CB15N) (Caulobacter crescentus), this protein is Anti-sigma-F factor NrsF.